Reading from the N-terminus, the 158-residue chain is 18.2 kDa class I heat shock protein (158 aa).

The sHSP domain maps to 44–158; the sequence is ENSAFVSTRV…PEVKTIDISG (115 aa).

It belongs to the small heat shock protein (HSP20) family. In terms of assembly, forms oligomeric structures.

Its subcellular location is the cytoplasm. The polypeptide is 18.2 kDa class I heat shock protein (HSP18.2) (Medicago sativa (Alfalfa)).